Consider the following 189-residue polypeptide: Interferon alpha-14 (189 aa).

A signal peptide spans 1–23 (MALPFALMMALVVLSCKSSCSLG). Disulfide bonds link Cys24–Cys122 and Cys52–Cys162. N-linked (GlcNAc...) asparagine glycosylation is present at Asn95.

This sequence belongs to the alpha/beta interferon family.

The protein resides in the secreted. Produced by macrophages, IFN-alpha have antiviral activities. Interferon stimulates the production of two enzymes: a protein kinase and an oligoadenylate synthetase. In Homo sapiens (Human), this protein is Interferon alpha-14 (IFNA14).